A 258-amino-acid polypeptide reads, in one-letter code: Imidazole glycerol phosphate synthase subunit HisF (258 aa).

Active-site residues include Asp12 and Asp131.

Belongs to the HisA/HisF family. In terms of assembly, heterodimer of HisH and HisF.

Its subcellular location is the cytoplasm. The catalysed reaction is 5-[(5-phospho-1-deoxy-D-ribulos-1-ylimino)methylamino]-1-(5-phospho-beta-D-ribosyl)imidazole-4-carboxamide + L-glutamine = D-erythro-1-(imidazol-4-yl)glycerol 3-phosphate + 5-amino-1-(5-phospho-beta-D-ribosyl)imidazole-4-carboxamide + L-glutamate + H(+). It participates in amino-acid biosynthesis; L-histidine biosynthesis; L-histidine from 5-phospho-alpha-D-ribose 1-diphosphate: step 5/9. In terms of biological role, IGPS catalyzes the conversion of PRFAR and glutamine to IGP, AICAR and glutamate. The HisF subunit catalyzes the cyclization activity that produces IGP and AICAR from PRFAR using the ammonia provided by the HisH subunit. This chain is Imidazole glycerol phosphate synthase subunit HisF, found in Paenarthrobacter aurescens (strain TC1).